The primary structure comprises 57 residues: DNA-directed RNA polymerase subunit Rpo6 (57 aa).

It belongs to the archaeal Rpo6/eukaryotic RPB6 RNA polymerase subunit family. Part of the RNA polymerase complex.

Its subcellular location is the cytoplasm. The enzyme catalyses RNA(n) + a ribonucleoside 5'-triphosphate = RNA(n+1) + diphosphate. In terms of biological role, DNA-dependent RNA polymerase (RNAP) catalyzes the transcription of DNA into RNA using the four ribonucleoside triphosphates as substrates. In Pyrococcus abyssi (strain GE5 / Orsay), this protein is DNA-directed RNA polymerase subunit Rpo6.